The chain runs to 574 residues: Isocitrate dehydrogenase kinase/phosphatase (574 aa).

ATP contacts are provided by residues 315–321 and Lys-336; that span reads APGIRGM. The active site involves Asp-371.

This sequence belongs to the AceK family.

The protein resides in the cytoplasm. The enzyme catalyses L-seryl-[isocitrate dehydrogenase] + ATP = O-phospho-L-seryl-[isocitrate dehydrogenase] + ADP + H(+). In terms of biological role, bifunctional enzyme which can phosphorylate or dephosphorylate isocitrate dehydrogenase (IDH) on a specific serine residue. This is a regulatory mechanism which enables bacteria to bypass the Krebs cycle via the glyoxylate shunt in response to the source of carbon. When bacteria are grown on glucose, IDH is fully active and unphosphorylated, but when grown on acetate or ethanol, the activity of IDH declines drastically concomitant with its phosphorylation. The polypeptide is Isocitrate dehydrogenase kinase/phosphatase (Escherichia coli (strain SMS-3-5 / SECEC)).